A 447-amino-acid polypeptide reads, in one-letter code: UDP-glycosyltransferase 79B10 (447 aa).

UDP-alpha-D-glucose-binding positions include Ser260, 319–321 (VQQ), 336–344 (HCGFGSMWE), and 358–361 (LADQ).

Belongs to the UDP-glycosyltransferase family.

The sequence is that of UDP-glycosyltransferase 79B10 (UGT79B10) from Arabidopsis thaliana (Mouse-ear cress).